The following is a 63-amino-acid chain: Bowman-Birk type proteinase inhibitor (63 aa).

7 cysteine pairs are disulfide-bonded: C7–C60, C8–C23, C11–C56, C13–C21, C30–C37, C34–C49, and C39–C47.

As to quaternary structure, monomer.

Inhibits trypsin stoichiometrically at the molar ratio of 1:2, with a dissociation constant of 4.2 nM. Does not inhibit chymotrypsin. This is Bowman-Birk type proteinase inhibitor from Lupinus albus (White lupine).